A 145-amino-acid polypeptide reads, in one-letter code: Pseudoazurin (145 aa).

A signal peptide spans 1–22 (MFHHSLAAAAAALLALAAPGFA). Residues 27-115 (VHMLNKGESG…MGMVGLVQVG (89 aa)) form the Plastocyanin-like domain. Cu cation is bound by residues His62, Cys100, His103, and Met108. The tract at residues 126-145 (TAKMPKKARERMDAELAQVN) is disordered.

As to quaternary structure, homodimer. Cu cation serves as cofactor.

Its subcellular location is the periplasm. In terms of biological role, this soluble electron transfer copper protein is required for the inactivation of copper-containing nitrite reductase in the presence of oxygen. The protein is Pseudoazurin (pazS) of Paracoccus pantotrophus (Thiosphaera pantotropha).